A 562-amino-acid chain; its full sequence is UPF0649 protein C1442.02 (562 aa).

Serine 285 and serine 286 each carry phosphoserine. The segment at 288–308 is disordered; the sequence is DEEIAKNADVPAEVDNNSTKA.

It belongs to the UPF0649 family.

It localises to the cytoplasm. The protein localises to the nucleus. This is UPF0649 protein C1442.02 from Schizosaccharomyces pombe (strain 972 / ATCC 24843) (Fission yeast).